The sequence spans 601 residues: uncharacterized protein (601 aa).

Positions 1–24 (MKLSSLPSGLGLASLLGLISSATA) are cleaved as a signal peptide.

The protein localises to the membrane. This is an uncharacterized protein from Schizosaccharomyces pombe (strain 972 / ATCC 24843) (Fission yeast).